The chain runs to 106 residues: Immunoglobulin lambda constant 6 (106 aa).

Residues 7-101 (PSVTLFPPSS…EGSTVEKTVA (95 aa)) form the Ig-like domain. A disulfide bridge links cysteine 28 with cysteine 87.

As to quaternary structure, immunoglobulins are composed of two identical heavy chains and two identical light chains; disulfide-linked.

It is found in the secreted. The protein localises to the cell membrane. Functionally, constant region of immunoglobulin light chains. Immunoglobulins, also known as antibodies, are membrane-bound or secreted glycoproteins produced by B lymphocytes. In the recognition phase of humoral immunity, the membrane-bound immunoglobulins serve as receptors which, upon binding of a specific antigen, trigger the clonal expansion and differentiation of B lymphocytes into immunoglobulins-secreting plasma cells. Secreted immunoglobulins mediate the effector phase of humoral immunity, which results in the elimination of bound antigens. The antigen binding site is formed by the variable domain of one heavy chain, together with that of its associated light chain. Thus, each immunoglobulin has two antigen binding sites with remarkable affinity for a particular antigen. The variable domains are assembled by a process called V-(D)-J rearrangement and can then be subjected to somatic hypermutations which, after exposure to antigen and selection, allow affinity maturation for a particular antigen. The chain is Immunoglobulin lambda constant 6 from Homo sapiens (Human).